The following is a 263-amino-acid chain: Endonuclease 8 (263 aa).

The active-site Schiff-base intermediate with DNA is Pro-2. Glu-3 functions as the Proton donor in the catalytic mechanism. The active-site Proton donor; for beta-elimination activity is the Lys-53. Gln-70, Arg-125, and Asn-169 together coordinate DNA. The segment at 229 to 263 (KVFHRDGERCERCGGIIEKTTLSSRPFYWCPGCQH) adopts an FPG-type zinc-finger fold. The Proton donor; for delta-elimination activity role is filled by Arg-253.

It belongs to the FPG family. It depends on Zn(2+) as a cofactor.

The enzyme catalyses 2'-deoxyribonucleotide-(2'-deoxyribose 5'-phosphate)-2'-deoxyribonucleotide-DNA = a 3'-end 2'-deoxyribonucleotide-(2,3-dehydro-2,3-deoxyribose 5'-phosphate)-DNA + a 5'-end 5'-phospho-2'-deoxyribonucleoside-DNA + H(+). Involved in base excision repair of DNA damaged by oxidation or by mutagenic agents. Acts as a DNA glycosylase that recognizes and removes damaged bases. Has a preference for oxidized pyrimidines, such as thymine glycol, 5,6-dihydrouracil and 5,6-dihydrothymine. Has AP (apurinic/apyrimidinic) lyase activity and introduces nicks in the DNA strand. Cleaves the DNA backbone by beta-delta elimination to generate a single-strand break at the site of the removed base with both 3'- and 5'-phosphates. This is Endonuclease 8 from Klebsiella pneumoniae subsp. pneumoniae (strain ATCC 700721 / MGH 78578).